The primary structure comprises 143 residues: uncharacterized protein (143 aa).

Positions 1 to 143 (MRSSRQKASI…WFSQTVKRKA (143 aa)) are disordered. Basic and acidic residues-rich tracts occupy residues 34–46 (ISAE…KHLD) and 61–76 (EYQK…RKIV). Acidic residues-rich tracts occupy residues 77 to 93 (DDEE…PEEE) and 103 to 115 (YEEE…PDLA).

This is an uncharacterized protein from Bacillus subtilis (strain 168).